Here is a 362-residue protein sequence, read N- to C-terminus: Chorismate synthase (362 aa).

Arg46 serves as a coordination point for NADP(+). Residues 122–124 (RSS), 238–239 (NA), Gly278, 293–297 (KPTPS), and Arg319 contribute to the FMN site.

The protein belongs to the chorismate synthase family. Homotetramer. It depends on FMNH2 as a cofactor.

The enzyme catalyses 5-O-(1-carboxyvinyl)-3-phosphoshikimate = chorismate + phosphate. It participates in metabolic intermediate biosynthesis; chorismate biosynthesis; chorismate from D-erythrose 4-phosphate and phosphoenolpyruvate: step 7/7. Its function is as follows. Catalyzes the anti-1,4-elimination of the C-3 phosphate and the C-6 proR hydrogen from 5-enolpyruvylshikimate-3-phosphate (EPSP) to yield chorismate, which is the branch point compound that serves as the starting substrate for the three terminal pathways of aromatic amino acid biosynthesis. This reaction introduces a second double bond into the aromatic ring system. This Campylobacter jejuni subsp. jejuni serotype O:2 (strain ATCC 700819 / NCTC 11168) protein is Chorismate synthase.